A 370-amino-acid chain; its full sequence is Mitochondrial carrier protein SCaMC-3L (370 aa).

3 Solcar repeats span residues 90–176 (EALW…CKNY), 184–269 (PPFQ…LQCF), and 280–367 (PSGL…MKKT). The next 6 helical transmembrane spans lie at 96-113 (LLSG…TAPL), 151-170 (GNGI…FSVF), 194-207 (SLAV…INPM), 245-263 (YLPN…LAVY), 282-306 (GLVS…LTLV), and 342-361 (GMTP…YVVY).

It belongs to the mitochondrial carrier (TC 2.A.29) family.

The protein resides in the mitochondrion inner membrane. The catalysed reaction is Mg(2+)(out) + phosphate(in) + ATP(out) = Mg(2+)(in) + phosphate(out) + ATP(in). It catalyses the reaction ADP(out) + phosphate(in) + H(+)(out) = ADP(in) + phosphate(out) + H(+)(in). Calcium-independent ATP-Mg/Pi exchanger that catalyzes the electroneutral exchange of Mg-ATP or free ADP against an hydrogenphosphate and participates in the net transport of adenine nucleotides across the mitochondria inner membrane. The polypeptide is Mitochondrial carrier protein SCaMC-3L (Homo sapiens (Human)).